The sequence spans 198 residues: NAD(P)H dehydrogenase (quinone) (198 aa).

The region spanning 4–189 (VLVLYYSMYG…SIARYQGEYV (186 aa)) is the Flavodoxin-like domain. FMN is bound by residues 10–15 (SMYGHI) and 78–80 (TRF). Residue tyrosine 12 participates in NAD(+) binding. Substrate is bound at residue tryptophan 98. FMN is bound by residues 113–118 (STGTGG) and histidine 133.

This sequence belongs to the WrbA family. The cofactor is FMN.

It carries out the reaction a quinone + NADH + H(+) = a quinol + NAD(+). The enzyme catalyses a quinone + NADPH + H(+) = a quinol + NADP(+). This Shigella dysenteriae serotype 1 (strain Sd197) protein is NAD(P)H dehydrogenase (quinone).